A 161-amino-acid chain; its full sequence is 18.1 kDa class I heat shock protein (161 aa).

Residues 47–161 (ETAAFAGARI…PDVKSIQVTG (115 aa)) form the sHSP domain.

Belongs to the small heat shock protein (HSP20) family. May form oligomeric structures.

The protein localises to the cytoplasm. This Oryza sativa subsp. japonica (Rice) protein is 18.1 kDa class I heat shock protein (HSP18.1).